The sequence spans 92 residues: Sec-independent protein translocase protein TatA (92 aa).

Residues 2–22 (IPANFGGTELIILLVIILLLF) form a helical membrane-spanning segment. Positions 43-92 (KGTSGAYEELEEKKGEEEKDEGGKKEAEASGRGEEEQQARAAGEAGRKQG) are disordered. The segment covering 53-80 (EEKKGEEEKDEGGKKEAEASGRGEEEQQ) has biased composition (basic and acidic residues).

Belongs to the TatA/E family. In terms of assembly, the Tat system comprises two distinct complexes: a TatABC complex, containing multiple copies of TatA, TatB and TatC subunits, and a separate TatA complex, containing only TatA subunits. Substrates initially bind to the TatABC complex, which probably triggers association of the separate TatA complex to form the active translocon.

The protein localises to the cell membrane. Functionally, part of the twin-arginine translocation (Tat) system that transports large folded proteins containing a characteristic twin-arginine motif in their signal peptide across membranes. TatA could form the protein-conducting channel of the Tat system. The polypeptide is Sec-independent protein translocase protein TatA (Rubrobacter xylanophilus (strain DSM 9941 / JCM 11954 / NBRC 16129 / PRD-1)).